A 453-amino-acid chain; its full sequence is UPF0210 protein Mbur_0828 (453 aa).

Belongs to the UPF0210 family.

The polypeptide is UPF0210 protein Mbur_0828 (Methanococcoides burtonii (strain DSM 6242 / NBRC 107633 / OCM 468 / ACE-M)).